Here is a 76-residue protein sequence, read N- to C-terminus: Cytochrome c oxidase subunit 6C-1 (76 aa).

Over 4–14 (GALLPKPQMHD) the chain is Mitochondrial matrix. Residues 15 to 55 (PLSKRLWVHIVGAFIVDLGVAAAHKFGAAKPRKKAYADFYR) traverse the membrane as a helical segment. Over 56-76 (NHDPMKDFDEMRKAGVFRSVK) the chain is Mitochondrial intermembrane.

Belongs to the cytochrome c oxidase subunit 6c family. As to quaternary structure, component of the cytochrome c oxidase (complex IV, CIV), a multisubunit enzyme composed of 14 subunits. The complex is composed of a catalytic core of 3 subunits MT-CO1, MT-CO2 and MT-CO3, encoded in the mitochondrial DNA, and 11 supernumerary subunits COX4I, COX5A, COX5B, COX6A, COX6B, COX6C, COX7A, COX7B, COX7C, COX8 and NDUFA4, which are encoded in the nuclear genome. The complex exists as a monomer or a dimer and forms supercomplexes (SCs) in the inner mitochondrial membrane with NADH-ubiquinone oxidoreductase (complex I, CI) and ubiquinol-cytochrome c oxidoreductase (cytochrome b-c1 complex, complex III, CIII), resulting in different assemblies (supercomplex SCI(1)III(2)IV(1) and megacomplex MCI(2)III(2)IV(2)).

It is found in the mitochondrion inner membrane. It functions in the pathway energy metabolism; oxidative phosphorylation. In terms of biological role, component of the cytochrome c oxidase, the last enzyme in the mitochondrial electron transport chain which drives oxidative phosphorylation. The respiratory chain contains 3 multisubunit complexes succinate dehydrogenase (complex II, CII), ubiquinol-cytochrome c oxidoreductase (cytochrome b-c1 complex, complex III, CIII) and cytochrome c oxidase (complex IV, CIV), that cooperate to transfer electrons derived from NADH and succinate to molecular oxygen, creating an electrochemical gradient over the inner membrane that drives transmembrane transport and the ATP synthase. Cytochrome c oxidase is the component of the respiratory chain that catalyzes the reduction of oxygen to water. Electrons originating from reduced cytochrome c in the intermembrane space (IMS) are transferred via the dinuclear copper A center (CU(A)) of subunit 2 and heme A of subunit 1 to the active site in subunit 1, a binuclear center (BNC) formed by heme A3 and copper B (CU(B)). The BNC reduces molecular oxygen to 2 water molecules using 4 electrons from cytochrome c in the IMS and 4 protons from the mitochondrial matrix. The polypeptide is Cytochrome c oxidase subunit 6C-1 (Cox6c1) (Rattus norvegicus (Rat)).